Here is a 480-residue protein sequence, read N- to C-terminus: uncharacterized protein (480 aa).

Residues 16–46 (CDRCRRRKIRCTGSDIPGQPCLACQKAHADC) constitute a DNA-binding region (zn(2)-C6 fungal-type). Low complexity predominate over residues 298–307 (SFGASVSPKS). A disordered region spans residues 298–325 (SFGASVSPKSTPGSNSTGAAVDTNSVHS). Residues 308 to 325 (TPGSNSTGAAVDTNSVHS) show a composition bias toward polar residues.

Its subcellular location is the cytoplasm. It is found in the nucleus. This is an uncharacterized protein from Schizosaccharomyces pombe (strain 972 / ATCC 24843) (Fission yeast).